The sequence spans 322 residues: Serine protease 38 (322 aa).

A signal peptide spans 1 to 28; that stretch reads MAALTSGLGVLGYLLFPLLLASPTWVTS. A propeptide spans 29–55 (activation peptide); sequence VSRRHPKSQANSLSGDVACGQPVLQGK. Positions 56-289 constitute a Peptidase S1 domain; the sequence is LLGGEFARDR…FLSWIRYHLQ (234 aa). Cys81 and Cys97 form a disulfide bridge. Residues His96 and Asp146 each act as charge relay system in the active site. The N-linked (GlcNAc...) asparagine glycan is linked to Asn176. Cystine bridges form between Cys179-Cys247, Cys210-Cys226, and Cys237-Cys265. Ser241 serves as the catalytic Charge relay system. Residues Asn250 and Asn276 are each glycosylated (N-linked (GlcNAc...) asparagine).

Belongs to the peptidase S1 family.

It localises to the secreted. This Mus musculus (Mouse) protein is Serine protease 38 (Prss38).